We begin with the raw amino-acid sequence, 155 residues long: Endoribonuclease YbeY (155 aa).

Zn(2+)-binding residues include H119, H123, and H129.

The protein belongs to the endoribonuclease YbeY family. Requires Zn(2+) as cofactor.

The protein resides in the cytoplasm. Functionally, single strand-specific metallo-endoribonuclease involved in late-stage 70S ribosome quality control and in maturation of the 3' terminus of the 16S rRNA. The protein is Endoribonuclease YbeY of Mycoplasmopsis synoviae (strain 53) (Mycoplasma synoviae).